We begin with the raw amino-acid sequence, 169 residues long: MDTNKIQGDKPIMNVEKIRQILPHRYPMLLVDRVMELVQNTSDSEPNGYIKAYKNVTINEEVFLGHFPNKPIYPGVMQIEGMAQAGGLLAFVSMFGDNVAEAKNKIVYFMTIDNVKFRIPVVPGDRLVYELKVLKHKGSIWQLGANAFVEDKLVSEAELKAMITEAKES.

Histidine 66 is an active-site residue.

Belongs to the thioester dehydratase family. FabZ subfamily.

It is found in the cytoplasm. The catalysed reaction is a (3R)-hydroxyacyl-[ACP] = a (2E)-enoyl-[ACP] + H2O. Involved in unsaturated fatty acids biosynthesis. Catalyzes the dehydration of short chain beta-hydroxyacyl-ACPs and long chain saturated and unsaturated beta-hydroxyacyl-ACPs. In Helicobacter hepaticus (strain ATCC 51449 / 3B1), this protein is 3-hydroxyacyl-[acyl-carrier-protein] dehydratase FabZ.